A 320-amino-acid polypeptide reads, in one-letter code: Cytochrome f (320 aa).

The signal sequence occupies residues 1–36 (MKHTNSKQKLKDIINFCQAIFTLCIICLYQANISNS). Residues Y37, C57, C60, and H61 each coordinate heme. A helical membrane pass occupies residues 286 to 305 (LISFIFFSISVLISQLFFVL).

This sequence belongs to the cytochrome f family. In terms of assembly, the 4 large subunits of the cytochrome b6-f complex are cytochrome b6, subunit IV (17 kDa polypeptide, petD), cytochrome f and the Rieske protein, while the 4 small subunits are PetG, PetL, PetM and PetN. The complex functions as a dimer. The cofactor is heme.

The protein localises to the plastid. The protein resides in the chloroplast thylakoid membrane. In terms of biological role, component of the cytochrome b6-f complex, which mediates electron transfer between photosystem II (PSII) and photosystem I (PSI), cyclic electron flow around PSI, and state transitions. This is Cytochrome f (petA) from Cyanidium caldarium (Red alga).